The sequence spans 343 residues: DNA-directed RNA polymerase subunit alpha (343 aa).

The segment at 1–239 (MGETVTIQKN…DQLNVFVNFE (239 aa)) is alpha N-terminal domain (alpha-NTD). The tract at residues 255-343 (FNPAFLKKVD…ELAKRFEDHY (89 aa)) is alpha C-terminal domain (alpha-CTD).

It belongs to the RNA polymerase alpha chain family. As to quaternary structure, homodimer. The RNAP catalytic core consists of 2 alpha, 1 beta, 1 beta' and 1 omega subunit. When a sigma factor is associated with the core the holoenzyme is formed, which can initiate transcription.

It carries out the reaction RNA(n) + a ribonucleoside 5'-triphosphate = RNA(n+1) + diphosphate. Its function is as follows. DNA-dependent RNA polymerase catalyzes the transcription of DNA into RNA using the four ribonucleoside triphosphates as substrates. The chain is DNA-directed RNA polymerase subunit alpha from Bradyrhizobium diazoefficiens (strain JCM 10833 / BCRC 13528 / IAM 13628 / NBRC 14792 / USDA 110).